Here is a 372-residue protein sequence, read N- to C-terminus: Mitogen-activated protein kinase kinase kinase 17 (372 aa).

The 257-residue stretch at Trp-3 to Leu-259 folds into the Protein kinase domain. Residues Leu-9 to Val-17 and Lys-32 each bind ATP. Residue Asp-126 is the Proton acceptor of the active site. The residue at position 312 (Ser-312) is a Phosphoserine.

The protein belongs to the protein kinase superfamily. Ser/Thr protein kinase family. In terms of assembly, binds to MKK3.

It localises to the nucleus. The enzyme catalyses L-seryl-[protein] + ATP = O-phospho-L-seryl-[protein] + ADP + H(+). The catalysed reaction is L-threonyl-[protein] + ATP = O-phospho-L-threonyl-[protein] + ADP + H(+). Its function is as follows. Component of the abscisic acid (ABA) signaling pathway that may act as ABA signal transducer in the context of abiotic stresses. Triggers MPK7 activation in a MKK3-dependent manner. Mediates the ABA-dependent activation of the MKK3-MPK7 module. The protein is Mitogen-activated protein kinase kinase kinase 17 of Arabidopsis thaliana (Mouse-ear cress).